A 90-amino-acid chain; its full sequence is MNKTDLINAVAEQADLTKKEAGSAVDAVFESIQNSLAKGEKVQLIGFGNFEVRERAARKGRNPQTGKEIDIPASKVPAFKAGKALKDAVK.

This sequence belongs to the bacterial histone-like protein family. As to quaternary structure, homodimer.

Its function is as follows. Histone-like DNA-binding protein which is capable of wrapping DNA to stabilize it, and thus to prevent its denaturation under extreme environmental conditions. The polypeptide is DNA-binding protein HU (hup) (Staphylococcus aureus (strain COL)).